Reading from the N-terminus, the 116-residue chain is MKGFKSLVVMTLTLFLVFSFMGNCNSAPQRLFERRNWTPQAMLYLKGAQGRRFLSDQSRRKDLSDRPPLERRSPNSQQLTLPEAAAVLLAFLQKPQEAGDENLDQTRFLEDSLLNW.

The signal sequence occupies residues 1–26; it reads MKGFKSLVVMTLTLFLVFSFMGNCNS. The propeptide occupies 27–35; that stretch reads APQRLFERR. The residue at position 49 (Gln-49) is a Glutamine amide. Propeptides lie at residues 50-116 and 74-116; these read GRRF…LLNW and PNSQ…LLNW. A compositionally biased stretch (basic and acidic residues) spans 53 to 73; that stretch reads FLSDQSRRKDLSDRPPLERRS. The segment at 53-80 is disordered; it reads FLSDQSRRKDLSDRPPLERRSPNSQQLT.

This sequence belongs to the spexin family.

It localises to the secreted. It is found in the extracellular space. The protein resides in the cytoplasmic vesicle. The protein localises to the secretory vesicle. Plays a role as a central modulator of cardiovascular and renal function and nociception. Also plays a role in energy metabolism and storage. Inhibits adrenocortical cell proliferation with minor stimulation on corticosteroid release. Its function is as follows. Acts as a ligand for galanin receptors GALR2 and GALR3. Intracerebroventricular administration of the peptide induces an increase in arterial blood pressure, a decrease in both heart rate and renal excretion and delayed natriuresis. Intraventricular administration of the peptide induces antinociceptive activity. Also induces contraction of muscarinic-like stomach smooth muscles. Intraperitoneal administration of the peptide induces a reduction in food consumption and body weight. Inhibits long chain fatty acid uptake into adipocytes. Functionally, intracerebroventricular administration of the peptide induces a decrease in heart rate, but no change in arterial pressure, and an increase in urine flow rate. Intraventricular administration of the peptide induces antinociceptive activity. The chain is Spexin (SPX) from Bos taurus (Bovine).